We begin with the raw amino-acid sequence, 378 residues long: Queuine tRNA-ribosyltransferase (378 aa).

Asp89 acts as the Proton acceptor in catalysis. Residues 89 to 93, Asp143, Gln187, and Gly214 each bind substrate; that span reads DSGGF. Residues 245-251 are RNA binding; sequence GVGKPED. Asp264 functions as the Nucleophile in the catalytic mechanism. Residues 269-273 are RNA binding; important for wobble base 34 recognition; the sequence is TRNAR. The Zn(2+) site is built by Cys302, Cys304, Cys307, and His333.

Belongs to the queuine tRNA-ribosyltransferase family. Homodimer. Within each dimer, one monomer is responsible for RNA recognition and catalysis, while the other monomer binds to the replacement base PreQ1. Zn(2+) serves as cofactor.

It catalyses the reaction 7-aminomethyl-7-carbaguanine + guanosine(34) in tRNA = 7-aminomethyl-7-carbaguanosine(34) in tRNA + guanine. Its pathway is tRNA modification; tRNA-queuosine biosynthesis. Catalyzes the base-exchange of a guanine (G) residue with the queuine precursor 7-aminomethyl-7-deazaguanine (PreQ1) at position 34 (anticodon wobble position) in tRNAs with GU(N) anticodons (tRNA-Asp, -Asn, -His and -Tyr). Catalysis occurs through a double-displacement mechanism. The nucleophile active site attacks the C1' of nucleotide 34 to detach the guanine base from the RNA, forming a covalent enzyme-RNA intermediate. The proton acceptor active site deprotonates the incoming PreQ1, allowing a nucleophilic attack on the C1' of the ribose to form the product. After dissociation, two additional enzymatic reactions on the tRNA convert PreQ1 to queuine (Q), resulting in the hypermodified nucleoside queuosine (7-(((4,5-cis-dihydroxy-2-cyclopenten-1-yl)amino)methyl)-7-deazaguanosine). The sequence is that of Queuine tRNA-ribosyltransferase from Aeromonas hydrophila subsp. hydrophila (strain ATCC 7966 / DSM 30187 / BCRC 13018 / CCUG 14551 / JCM 1027 / KCTC 2358 / NCIMB 9240 / NCTC 8049).